Consider the following 779-residue polypeptide: Angiomotin-like protein 2 (779 aa).

Disordered regions lie at residues 41–215 and 263–308; these read GGAG…QYPH and QYLQ…TSGS. Basic and acidic residues-rich tracts occupy residues 100 to 112 and 141 to 152; these read KGEELPTYEEAKA and RRQDEALRELRH. Positions 101–307 are required for interaction with CDH5; the sequence is GEELPTYEEA…SAQASSATSG (207 aa). Tyrosine 107 carries the post-translational modification Phosphotyrosine; by FGFR1. The segment covering 160 to 169 has biased composition (low complexity); that stretch reads ERLLQLSLER. The segment covering 177-193 has biased composition (polar residues); it reads HMSSSHSFPQLARNQQG. Pro residues predominate over residues 196 to 213; the sequence is LRGPPAEGPESRGPPPQY. The interval 220 to 307 is required for interaction with CDH1; that stretch reads HETTTAVTDP…SAQASSATSG (88 aa). The segment covering 298–308 has biased composition (low complexity); the sequence is SAQASSATSGS. The stretch at 308–581 forms a coiled coil; that stretch reads SAHLAQMEAV…KYLEERAMRQ (274 aa). Residues lysine 347 and lysine 408 each participate in a glycyl lysine isopeptide (Lys-Gly) (interchain with G-Cter in ubiquitin) cross-link. 2 disordered regions span residues 522 to 543 and 679 to 753; these read RAQQRQAGAPGGSSGSGGSPEL and TQGW…GCSS. Over residues 530-539 the composition is skewed to gly residues; sequence APGGSSGSGG. 2 stretches are compositionally biased toward polar residues: residues 680–690 and 725–740; these read QGWQGLSSSER and DGSTQTEGPPDSTSTC. A phosphoserine mark is found at serine 759 and serine 762. The short motif at 776–779 is the PDZ-binding element; it reads EILI.

The protein belongs to the angiomotin family. In terms of assembly, part of a complex composed of AMOTL2, MAGI1 and CDH5, within the complex AMOTL2 acts as a scaffold protein for the interaction of MAGI1 with CDH5. The complex is required for coupling actin fibers to cell junctions in endothelial cells. Within the complex AMOTL2 (via its N-terminus) interacts with CDH5. Interacts (via N-terminus) with MAGI1. Interacts (via N-terminus) with ACTB; the interaction facilitates binding of cell junction complexes to actin fibers in endothelial cells. Interacts with CDH1; the interaction may facilitate binding of radial actin fibers to cell junction complexes. Interacts with SRC. Interacts with YAP1; the interaction is required for ubiquitination of AMOTL2 and localization of YAP1 to tight junctions. Interacts with WWP1; the interaction facilitates WWP1 interaction with the Crumbs complex and subsequent WWP1 translocation to the plasma membrane. WWP1 interaction with the Crumbs complex promotes WWP1 monoubiquitination of AMOTL2 which subsequently activates the Hippo signaling pathway. When ubiquitinated interacts with LATS2 (via UBA domain); the interaction promotes LATS2 phosphorylation of YAP1. Interacts (via PPXY motif) with WWTR1/TAZ (via WW domain); the interaction promotes WWTR1/TAZ localization to the cytoplasm and thereby inhibition of its transcriptional properties. Interacts with PHLDB2; interaction may facilitate PHLDB2 localization to the myotube podosome cortex that surrounds the core. In terms of processing, monoubiquitinated at Lys-347 and Lys-408 by Crumbs complex-bound WWP1. De-ubiquitinated at Lys-347 and Lys-408 by USP9X; the interaction may be promoted by cell contact inhibition. Deubiquitination of AMOTL2 negatively regulates Hippo signaling activation. Phosphorylation at Tyr-107 is necessary for efficient binding to SRC and synergistically functioning with SRC to activate the downstream MAPK pathway.

It localises to the recycling endosome. It is found in the cytoplasm. Its subcellular location is the cell projection. The protein localises to the podosome. The protein resides in the cell junction. In terms of biological role, regulates the translocation of phosphorylated SRC to peripheral cell-matrix adhesion sites. Required for proper architecture of actin filaments. Plays a role in coupling actin fibers to cell junctions in endothelial cells and is therefore required for correct endothelial cell morphology via facilitating transcellular transmission of mechanical force resulting in endothelial cell elongation. Required for the anchoring of radial actin fibers to CDH1 junction complexes at the cell membrane which facilitates organization of radial actin fiber structure and cellular response to contractile forces. This contributes to maintenance of cell area, size, shape, epithelial sheet organization and trophectoderm cell properties that facilitate blastocyst zona hatching. Inhibits the Wnt/beta-catenin signaling pathway, probably by recruiting CTNNB1 to recycling endosomes and hence preventing its translocation to the nucleus. Participates in angiogenesis. Activates the Hippo signaling pathway in response to cell contact inhibition via interaction with and ubiquitination by Crumbs complex-bound WWP1. Ubiquitinated AMOTL2 then interacts with LATS2 which in turn phosphorylates YAP1, excluding it from the nucleus and localizing it to the cytoplasm and tight junctions, therefore ultimately repressing YAP1-driven transcription of target genes. Acts to inhibit WWTR1/TAZ transcriptional coactivator activity via sequestering WWTR1/TAZ in the cytoplasm and at tight junctions. Regulates the size and protein composition of the podosome cortex and core at myofibril neuromuscular junctions. Selectively promotes FGF-induced MAPK activation through SRC. May play a role in the polarity, proliferation and migration of endothelial cells. This Homo sapiens (Human) protein is Angiomotin-like protein 2.